The primary structure comprises 392 residues: Enoyl-[acyl-carrier-protein] reductase [NADH] (392 aa).

NAD(+) contacts are provided by residues 48-53, 74-75, 111-112, and 139-140; these read GCSTGY, FE, DA, and LA. Tyr-225 is a substrate binding site. Tyr-235 serves as the catalytic Proton donor. NAD(+) is bound by residues Lys-244 and 273–275; that span reads LVT.

This sequence belongs to the TER reductase family. Monomer.

It carries out the reaction a 2,3-saturated acyl-[ACP] + NAD(+) = a (2E)-enoyl-[ACP] + NADH + H(+). It participates in lipid metabolism; fatty acid biosynthesis. Involved in the final reduction of the elongation cycle of fatty acid synthesis (FAS II). Catalyzes the reduction of a carbon-carbon double bond in an enoyl moiety that is covalently linked to an acyl carrier protein (ACP). This Idiomarina loihiensis (strain ATCC BAA-735 / DSM 15497 / L2-TR) protein is Enoyl-[acyl-carrier-protein] reductase [NADH].